The chain runs to 449 residues: Neurexin-1a-beta (449 aa).

The signal sequence occupies residues 1–38 (MLRLWPGGAPGGLASILLRISLRLALWLPPLTLGSALA). Residues 39–373 (EGPGELYVPQ…EVIRESSSTT (335 aa)) are Extracellular-facing. In terms of domain architecture, Laminin G-like spans 71-272 (TTYIFGRDGG…DPNVRVEGSA (202 aa)). The disordered stretch occupies residues 276–366 (GDMPSSSITP…AKGYPSPEVI (91 aa)). The span at 280 to 311 (SSSITPQSSVSAAGNRSETSPSITDITTTTAS) shows a compositional bias: low complexity. Residues 312–322 (NRQGKQTTTPQ) are compositionally biased toward polar residues. Residues 374–394 (GMVVGIVAAAALCILILLYAM) traverse the membrane as a helical segment. Residues 395–449 (YKYRNRDEGSYHVDESRNYISNSATQPNGAAVKEKPIGVPKNKKDKKNKDKEYYV) lie on the Cytoplasmic side of the membrane. The disordered stretch occupies residues 415–449 (SNSATQPNGAAVKEKPIGVPKNKKDKKNKDKEYYV).

Belongs to the neurexin family.

Its subcellular location is the membrane. Its function is as follows. Neuronal cell surface protein that may be involved in cell recognition and cell adhesion. May play a role in formation or maintenance of synaptic junctions. In Danio rerio (Zebrafish), this protein is Neurexin-1a-beta (nrxn1a).